A 291-amino-acid polypeptide reads, in one-letter code: MLKSSWRKTALMAAAAVPLLLASGSLWASADAIQQKLADLEKRSGGRLGVALINTADDSQTLYRGDERFAMCSTGKVMAAAAVLKQSESNPEVVNKRLEIKKSDLVVWSPITEKHLQSGMTLAELSAAALQYSDNTAMNKMISYLGGPEKVTAFAQSIGDVTFRLDRTEPALNSAIPGDKRDTTTPLAMAESLRKLTLGNALGEQQRAQLVTWLKGNTTGGQSIRAGLPASWAVGDKTGAGDYGTTNDIAVIWPENHAPLVLVTYFTQPQQDAKSRKEVLAAAAKIVTEGL.

The N-terminal stretch at 1-24 (MLKSSWRKTALMAAAAVPLLLASG) is a signal peptide. Serine 73 serves as the catalytic Acyl-ester intermediate. 237-239 (KTG) contributes to the substrate binding site.

Belongs to the class-A beta-lactamase family.

The enzyme catalyses a beta-lactam + H2O = a substituted beta-amino acid. Hydrolyzes broad-spectrum beta-lactam antibiotics. Active against cephalosporins. The polypeptide is Beta-lactamase OXY-1 (bla) (Klebsiella oxytoca).